A 503-amino-acid polypeptide reads, in one-letter code: Cardiolipin synthase (503 aa).

A run of 3 helical transmembrane segments spans residues 5 to 25 (LNVL…RSFW), 29 to 49 (IVGA…IVIF), and 59 to 79 (LTWL…YLMF). PLD phosphodiesterase domains are found at residues 238-265 (INYR…GDEY) and 416-443 (TRGF…DMRS). Residues His243, Lys245, Asp250, His421, Lys423, and Asp428 contribute to the active site.

This sequence belongs to the phospholipase D family. Cardiolipin synthase subfamily.

The protein resides in the cell membrane. The catalysed reaction is 2 a 1,2-diacyl-sn-glycero-3-phospho-(1'-sn-glycerol) = a cardiolipin + glycerol. In terms of biological role, catalyzes the reversible phosphatidyl group transfer from one phosphatidylglycerol molecule to another to form cardiolipin (CL) (diphosphatidylglycerol) and glycerol. In Halalkalibacterium halodurans (strain ATCC BAA-125 / DSM 18197 / FERM 7344 / JCM 9153 / C-125) (Bacillus halodurans), this protein is Cardiolipin synthase (cls).